The primary structure comprises 504 residues: Probable chlorophyll(ide) b reductase NYC1, chloroplastic (504 aa).

The transit peptide at 1–33 (MAAAAVVHLSVHGRLRRSPELHARPYHRPSLLR) directs the protein to the chloroplast. The interval 41–63 (ADNGGEEASSSPPPPTTAEARRR) is disordered. Transmembrane regions (helical) follow at residues 114-134 (YVIT…LSGG) and 141-161 (LIWY…ANSV). 175 to 199 (ITGSTRGLGKALAREFLLSGDRVVI) serves as a coordination point for NAD(+). Catalysis depends on tyrosine 339, which acts as the Proton acceptor. The chain crosses the membrane as a helical span at residues 479–499 (WVSVFSLSVVCAFIILSSSGG).

The protein belongs to the short-chain dehydrogenases/reductases (SDR) family. As to quaternary structure, interacts with NOL to form a complex that acts as a chlorophyll b reductase. As to expression, expressed in leaves and stems. Also detected in non-photosynthetic tissues such as roots.

The protein resides in the plastid. Its subcellular location is the chloroplast thylakoid membrane. The catalysed reaction is 7(1)-hydroxychlorophyllide a + NAD(+) = chlorophyllide b + NADH + H(+). It catalyses the reaction 7(1)-hydroxychlorophyllide a + NADP(+) = chlorophyllide b + NADPH + H(+). Required for proper chloroplast degradation. Involved in chlorophyll b degradation. This is Probable chlorophyll(ide) b reductase NYC1, chloroplastic (NYC1) from Oryza sativa subsp. japonica (Rice).